Here is a 380-residue protein sequence, read N- to C-terminus: Alkaline protease (380 aa).

Positions 1-27 are cleaved as a signal peptide; sequence MKKPLGKIVASTALLISVAFSSSIASA. The propeptide occupies 28–112; sequence AEEAKEKYLI…EEDAEVTTMA (85 aa). Residues 34–111 enclose the Inhibitor I9 domain; it reads KYLIGFNEQE…IEEDAEVTTM (78 aa). Gln-113 is a binding site for Ca(2+). Positions 116-379 constitute a Peptidase S8 domain; sequence PWGISRVQAP…SGLVNAEAAT (264 aa). Asp-143 functions as the Charge relay system in the catalytic mechanism. Asp-151 contributes to the Ca(2+) binding site. His-173 (charge relay system) is an active-site residue. 7 residues coordinate Ca(2+): Leu-184, Asn-186, Ile-188, Val-190, Ala-274, Tyr-276, and Ala-279. Residue Ser-326 is the Charge relay system of the active site.

The protein belongs to the peptidase S8 family. The cofactor is Ca(2+).

Its subcellular location is the secreted. The sequence is that of Alkaline protease from Alkalihalobacillus alcalophilus (Bacillus alcalophilus).